Here is a 282-residue protein sequence, read N- to C-terminus: ATP synthase gamma chain (282 aa).

This sequence belongs to the ATPase gamma chain family. As to quaternary structure, F-type ATPases have 2 components, CF(1) - the catalytic core - and CF(0) - the membrane proton channel. CF(1) has five subunits: alpha(3), beta(3), gamma(1), delta(1), epsilon(1). CF(0) has three main subunits: a, b and c.

The protein localises to the cell inner membrane. Produces ATP from ADP in the presence of a proton gradient across the membrane. The gamma chain is believed to be important in regulating ATPase activity and the flow of protons through the CF(0) complex. The sequence is that of ATP synthase gamma chain from Fusobacterium nucleatum subsp. nucleatum (strain ATCC 25586 / DSM 15643 / BCRC 10681 / CIP 101130 / JCM 8532 / KCTC 2640 / LMG 13131 / VPI 4355).